Here is a 239-residue protein sequence, read N- to C-terminus: 1-(5-phosphoribosyl)-5-[(5-phosphoribosylamino)methylideneamino] imidazole-4-carboxamide isomerase (239 aa).

Asp-8 functions as the Proton acceptor in the catalytic mechanism. Residue Asp-129 is the Proton donor of the active site.

The protein belongs to the HisA/HisF family.

The protein resides in the cytoplasm. It catalyses the reaction 1-(5-phospho-beta-D-ribosyl)-5-[(5-phospho-beta-D-ribosylamino)methylideneamino]imidazole-4-carboxamide = 5-[(5-phospho-1-deoxy-D-ribulos-1-ylimino)methylamino]-1-(5-phospho-beta-D-ribosyl)imidazole-4-carboxamide. It functions in the pathway amino-acid biosynthesis; L-histidine biosynthesis; L-histidine from 5-phospho-alpha-D-ribose 1-diphosphate: step 4/9. The protein is 1-(5-phosphoribosyl)-5-[(5-phosphoribosylamino)methylideneamino] imidazole-4-carboxamide isomerase of Bacillus cereus (strain AH820).